We begin with the raw amino-acid sequence, 372 residues long: NAD(P)H-quinone oxidoreductase subunit 1 (372 aa).

The next 8 helical transmembrane spans lie at 27-47 (MLWL…GVLV), 97-117 (ILFT…WLIV), 128-148 (VGVG…GLLM), 166-186 (AAQS…VVMM), 204-224 (VLSW…ICAL), 266-286 (VLSA…PIPV), 308-328 (TVGI…AILL), and 347-367 (FLLP…LAFP).

This sequence belongs to the complex I subunit 1 family. As to quaternary structure, NDH-1 is composed of at least 11 different subunits.

Its subcellular location is the cellular thylakoid membrane. It catalyses the reaction a plastoquinone + NADH + (n+1) H(+)(in) = a plastoquinol + NAD(+) + n H(+)(out). The enzyme catalyses a plastoquinone + NADPH + (n+1) H(+)(in) = a plastoquinol + NADP(+) + n H(+)(out). Its function is as follows. NDH-1 shuttles electrons from an unknown electron donor, via FMN and iron-sulfur (Fe-S) centers, to quinones in the respiratory and/or the photosynthetic chain. The immediate electron acceptor for the enzyme in this species is believed to be plastoquinone. Couples the redox reaction to proton translocation, and thus conserves the redox energy in a proton gradient. This Synechococcus sp. (strain CC9311) protein is NAD(P)H-quinone oxidoreductase subunit 1.